The following is a 220-amino-acid chain: Deoxyribose-phosphate aldolase (220 aa).

D89 serves as the catalytic Proton donor/acceptor. K152 functions as the Schiff-base intermediate with acetaldehyde in the catalytic mechanism. K181 serves as the catalytic Proton donor/acceptor.

The protein belongs to the DeoC/FbaB aldolase family. DeoC type 1 subfamily.

It localises to the cytoplasm. It catalyses the reaction 2-deoxy-D-ribose 5-phosphate = D-glyceraldehyde 3-phosphate + acetaldehyde. It functions in the pathway carbohydrate degradation; 2-deoxy-D-ribose 1-phosphate degradation; D-glyceraldehyde 3-phosphate and acetaldehyde from 2-deoxy-alpha-D-ribose 1-phosphate: step 2/2. Its function is as follows. Catalyzes a reversible aldol reaction between acetaldehyde and D-glyceraldehyde 3-phosphate to generate 2-deoxy-D-ribose 5-phosphate. The polypeptide is Deoxyribose-phosphate aldolase (Enterococcus faecalis (strain ATCC 700802 / V583)).